A 358-amino-acid chain; its full sequence is Alanine racemase (358 aa).

Lysine 35 (proton acceptor; specific for D-alanine) is an active-site residue. Position 35 is an N6-(pyridoxal phosphate)lysine (lysine 35). Arginine 130 provides a ligand contact to substrate. Tyrosine 255 (proton acceptor; specific for L-alanine) is an active-site residue. Methionine 303 contacts substrate.

The protein belongs to the alanine racemase family. Pyridoxal 5'-phosphate serves as cofactor.

The enzyme catalyses L-alanine = D-alanine. It participates in amino-acid biosynthesis; D-alanine biosynthesis; D-alanine from L-alanine: step 1/1. Functionally, catalyzes the interconversion of L-alanine and D-alanine. May also act on other amino acids. The polypeptide is Alanine racemase (alr) (Shewanella baltica (strain OS223)).